A 434-amino-acid chain; its full sequence is Putative magnesium transporter MRS2-D (434 aa).

3 disordered regions span residues 1 to 21 (MAAR…AAGE), 126 to 171 (AASP…DGEA), and 279 to 311 (EASE…AGGG). Residues 9–21 (AAGAGAPAPAAGE) are compositionally biased toward low complexity. Over residues 279–291 (EASELEDHSSRDE) the composition is skewed to basic and acidic residues. The next 2 helical transmembrane spans lie at 367-387 (GILL…TGVF) and 405-425 (FPCA…AALL).

Belongs to the CorA metal ion transporter (MIT) (TC 1.A.35.5) family.

Its subcellular location is the membrane. Functionally, putative magnesium transporter. The polypeptide is Putative magnesium transporter MRS2-D (MRS2-D) (Oryza sativa subsp. indica (Rice)).